Consider the following 216-residue polypeptide: GTP cyclohydrolase 1 (216 aa).

Cys108, His111, and Cys179 together coordinate Zn(2+).

Belongs to the GTP cyclohydrolase I family. As to quaternary structure, homomer.

It catalyses the reaction GTP + H2O = 7,8-dihydroneopterin 3'-triphosphate + formate + H(+). It participates in cofactor biosynthesis; 7,8-dihydroneopterin triphosphate biosynthesis; 7,8-dihydroneopterin triphosphate from GTP: step 1/1. This chain is GTP cyclohydrolase 1, found in Shewanella baltica (strain OS223).